Here is a 1046-residue protein sequence, read N- to C-terminus: Toluene efflux pump membrane transporter TtgE (1046 aa).

12 helical membrane passes run I10 to M30, S339 to L359, L370 to I390, V392 to V412, G440 to G460, F470 to P490, L542 to F562, A871 to E891, V895 to L915, V927 to A947, I973 to A993, and G1008 to V1028.

It belongs to the resistance-nodulation-cell division (RND) (TC 2.A.6) family.

It is found in the cell inner membrane. The inner membrane transporter component of an inducible organic solvent efflux pump. Involved in export of toluene and styrene but not of m-xylene, propylbenzene or ethylbenzene. Is not involved in antibiotic or AMP efflux. The chain is Toluene efflux pump membrane transporter TtgE (ttgE) from Pseudomonas putida (strain DOT-T1E).